Here is a 122-residue protein sequence, read N- to C-terminus: Holo-[acyl-carrier-protein] synthase (122 aa).

2 residues coordinate Mg(2+): aspartate 9 and glutamate 58.

This sequence belongs to the P-Pant transferase superfamily. AcpS family. Requires Mg(2+) as cofactor.

The protein localises to the cytoplasm. The catalysed reaction is apo-[ACP] + CoA = holo-[ACP] + adenosine 3',5'-bisphosphate + H(+). Its function is as follows. Transfers the 4'-phosphopantetheine moiety from coenzyme A to a Ser of acyl-carrier-protein. The chain is Holo-[acyl-carrier-protein] synthase from Chlamydia caviae (strain ATCC VR-813 / DSM 19441 / 03DC25 / GPIC) (Chlamydophila caviae).